The following is a 169-amino-acid chain: Lipoprotein signal peptidase (169 aa).

A run of 3 helical transmembrane segments spans residues 12–32 (WLWLVVVVLVLDFASKQWILG), 70–90 (WFFAGIAVAIVAVLLVMMYRS), and 102–122 (AFIIGGALGNLFDRLWHGFVV). Catalysis depends on residues Asp-123 and Asp-141. A helical transmembrane segment spans residues 137-157 (FNLADSFICVGAAMIVLEGFL).

It belongs to the peptidase A8 family.

The protein resides in the cell inner membrane. The enzyme catalyses Release of signal peptides from bacterial membrane prolipoproteins. Hydrolyzes -Xaa-Yaa-Zaa-|-(S,diacylglyceryl)Cys-, in which Xaa is hydrophobic (preferably Leu), and Yaa (Ala or Ser) and Zaa (Gly or Ala) have small, neutral side chains.. It functions in the pathway protein modification; lipoprotein biosynthesis (signal peptide cleavage). This protein specifically catalyzes the removal of signal peptides from prolipoproteins. The protein is Lipoprotein signal peptidase of Serratia proteamaculans (strain 568).